We begin with the raw amino-acid sequence, 172 residues long: Large ribosomal subunit protein uL10 (172 aa).

This sequence belongs to the universal ribosomal protein uL10 family. Part of the ribosomal stalk of the 50S ribosomal subunit. The N-terminus interacts with L11 and the large rRNA to form the base of the stalk. The C-terminus forms an elongated spine to which 3 L12 dimers bind in a sequential fashion forming a heptameric L10(L12)2(L12)2(L12)2 complex.

Forms part of the ribosomal stalk, playing a central role in the interaction of the ribosome with GTP-bound translation factors. The polypeptide is Large ribosomal subunit protein uL10 (Agrobacterium fabrum (strain C58 / ATCC 33970) (Agrobacterium tumefaciens (strain C58))).